The chain runs to 460 residues: Multidrug resistance protein NorM (460 aa).

12 helical membrane-spanning segments follow: residues 18 to 38 (VLIA…MAGG), 53 to 73 (VWLP…PVVA), 94 to 114 (LALL…FIIA), 126 to 146 (TQGY…FQTL), 159 to 179 (AMII…MFVY), 185 to 205 (PALG…LMFL), 242 to 262 (LPVA…ALLV), 276 to 296 (AINF…AVSI), 315 to 335 (YCGL…TLIF), 349 to 369 (VITL…TDAV), 391 to 411 (FVSY…TDWI), and 415 to 435 (MGVY…AILL).

It belongs to the multi antimicrobial extrusion (MATE) (TC 2.A.66.1) family.

The protein localises to the cell inner membrane. Functionally, multidrug efflux pump that functions as a Na(+)/drug antiporter. This is Multidrug resistance protein NorM (norM) from Aliivibrio fischeri (strain ATCC 700601 / ES114) (Vibrio fischeri).